Reading from the N-terminus, the 284-residue chain is MKQKVVSIGDINVANDLPFVLFGGMNVLESRDLAMRICEHYVTVTQKLGIPYVFKASFDKANRSSIHSYRGPGLEEGMKIFQELKQTFGVKIITDVHEPSQAQPVADVVDVIQLPAFLARQTDLVEAMAKTGAVINVKKPQFVSPGQMGNIVDKFKEGGNEKVILCDRGANFGYDNLVVDMLGFSIMKKVSGNSPVIFDVTHALQCRDPFGAASGGRRAQVAELARAGMAVGLAGLFIEAHPDPEHAKCDGPSALPLAKLEPFLKQMKAIDDLVKGFEELDTSK.

Belongs to the KdsA family.

The protein resides in the cytoplasm. The catalysed reaction is D-arabinose 5-phosphate + phosphoenolpyruvate + H2O = 3-deoxy-alpha-D-manno-2-octulosonate-8-phosphate + phosphate. It participates in carbohydrate biosynthesis; 3-deoxy-D-manno-octulosonate biosynthesis; 3-deoxy-D-manno-octulosonate from D-ribulose 5-phosphate: step 2/3. It functions in the pathway bacterial outer membrane biogenesis; lipopolysaccharide biosynthesis. The polypeptide is 2-dehydro-3-deoxyphosphooctonate aldolase (Shigella boydii serotype 18 (strain CDC 3083-94 / BS512)).